A 152-amino-acid polypeptide reads, in one-letter code: Ribonuclease pancreatic beta-type (152 aa).

The first 25 residues, 1–25 (MGLEKSFILFSLLVLVLGWVQPSLG), serve as a signal peptide directing secretion. Residues 31–45 (SSADKFKRQHMDPES) are compositionally biased toward basic and acidic residues. The interval 31–53 (SSADKFKRQHMDPESPSKSSPTY) is disordered. 2 residues coordinate substrate: K35 and R38. The active-site Proton acceptor is H40. 4 disulfides stabilise this stretch: C54–C112, C68–C123, C86–C138, and C93–C100. Substrate is bound by residues 69-73 (KPVNT), K94, and R113. H147 acts as the Proton donor in catalysis.

Belongs to the pancreatic ribonuclease family. In terms of assembly, monomer.

Its subcellular location is the secreted. The enzyme catalyses an [RNA] containing cytidine + H2O = an [RNA]-3'-cytidine-3'-phosphate + a 5'-hydroxy-ribonucleotide-3'-[RNA].. The catalysed reaction is an [RNA] containing uridine + H2O = an [RNA]-3'-uridine-3'-phosphate + a 5'-hydroxy-ribonucleotide-3'-[RNA].. Functionally, endonuclease that catalyzes the cleavage of RNA on the 3' side of pyrimidine nucleotides. Acts on single-stranded and double-stranded RNA. The polypeptide is Ribonuclease pancreatic beta-type (Rattus exulans (Polynesian rat)).